The primary structure comprises 555 residues: Inositol 1,4,5-trisphosphate receptor-interacting protein-like 1 (555 aa).

An N-terminal signal peptide occupies residues 1–24 (MNVDAEASMAVISLLFLAVMYVVH). Residues 25–103 (HPLMVSDRMD…WPFQADGQEG (79 aa)) lie on the Extracellular side of the membrane. Residues 38-74 (LARSRQLEKRMSEEMRLLEMEFEERKRAAEQRQKAEN) adopt a coiled-coil conformation. A helical membrane pass occupies residues 104–124 (PLGWMLGNLWNTGLFCLFLVF). Over 125 to 555 (ELLRQNMQHE…LPHAPLAAAP (431 aa)) the chain is Cytoplasmic.

It belongs to the ITPRIP family. In terms of tissue distribution, expressed in testis and tumoral cells.

It localises to the cell membrane. Functionally, functions as a ligand of CD3E, inhibiting TCR-CD3 complex signaling to regulate T cell activation. Induces stable CD3E-NCK1 binding, thereby preventing the CD3E-ZAP70 interaction and subsequently inhibiting the activation of the downstream ERK-NFkB signaling cascade and calcium influx. In Homo sapiens (Human), this protein is Inositol 1,4,5-trisphosphate receptor-interacting protein-like 1.